Consider the following 300-residue polypeptide: Ribosomal protein L11 methyltransferase (300 aa).

Positions 152, 173, 195, and 234 each coordinate S-adenosyl-L-methionine.

Belongs to the methyltransferase superfamily. PrmA family.

The protein resides in the cytoplasm. It carries out the reaction L-lysyl-[protein] + 3 S-adenosyl-L-methionine = N(6),N(6),N(6)-trimethyl-L-lysyl-[protein] + 3 S-adenosyl-L-homocysteine + 3 H(+). Functionally, methylates ribosomal protein L11. This Burkholderia ambifaria (strain ATCC BAA-244 / DSM 16087 / CCUG 44356 / LMG 19182 / AMMD) (Burkholderia cepacia (strain AMMD)) protein is Ribosomal protein L11 methyltransferase.